Consider the following 96-residue polypeptide: DNA/RNA-binding protein Alba (96 aa).

It belongs to the histone-like Alba family.

The protein localises to the cytoplasm. Its subcellular location is the chromosome. In terms of biological role, binds double-stranded DNA tightly but without sequence specificity. Involved in DNA compaction. This chain is DNA/RNA-binding protein Alba, found in Methanocella arvoryzae (strain DSM 22066 / NBRC 105507 / MRE50).